A 237-amino-acid chain; its full sequence is MSDSMESKTQQVVIPEDEECLMSGTRYSDISSRLQTKFGIKSLAEYTKQSRNPLVLQLLSFLFLAGLLLIILILVSKVPSSEVQNKIYQELMQLKAEVHDGLCQPCARDWTFFNGSCYFFSKSQRNWHNSTTACQELGAQLVIIETDEEQTFLQQTSKARGPTWMGLSDMHNEATWHWVDGSPLSPSFTRYWNRGEPNNVGDEDCAEFSGDGWNDLSCDKLLFWICKKVSTSSCTTK.

Topologically, residues 1–54 (MSDSMESKTQQVVIPEDEECLMSGTRYSDISSRLQTKFGIKSLAEYTKQSRNPL) are cytoplasmic. Residues 55 to 75 (VLQLLSFLFLAGLLLIILILV) form a helical; Signal-anchor for type II membrane protein membrane-spanning segment. At 76-237 (SKVPSSEVQN…KVSTSSCTTK (162 aa)) the chain is on the extracellular side. An intrachain disulfide couples cysteine 106 to cysteine 117. A C-type lectin domain is found at 112 to 227 (FFNGSCYFFS…CDKLLFWICK (116 aa)). N-linked (GlcNAc...) asparagine glycosylation is found at asparagine 114 and asparagine 129. Intrachain disulfides connect cysteine 134/cysteine 226 and cysteine 205/cysteine 218. Residues glutamate 196, asparagine 198, glutamate 203, asparagine 214, and aspartate 215 each coordinate Ca(2+).

Its subcellular location is the membrane. Its function is as follows. Probable pathogen-recognition receptor. May mediate the endocytosis of pathogens which are subsequently degraded in lysosomal compartments. May recognize in a calcium-dependent manner high mannose N-linked oligosaccharides in a variety of pathogen antigens. The chain is CD209 antigen-like protein D (Cd209d) from Mus musculus (Mouse).